A 217-amino-acid chain; its full sequence is Melanocortin-2 receptor accessory protein 2A (217 aa).

The N-linked (GlcNAc...) asparagine glycan is linked to N8. The helical transmembrane segment at 42-62 threads the bilayer; sequence IVIGFWVGLAVFVIFMFFVLT.

This sequence belongs to the MRAP family. As to quaternary structure, interacts with mc4r.

The protein resides in the cell membrane. It localises to the endoplasmic reticulum membrane. Its function is as follows. Inhibitor of melanocortin receptor 4 (mc4r), a receptor involved in energy homeostasis. Plays a role during larval development in the control of energy homeostasis and body weight regulation by decreasing ligand-sensitivity of mc4r and mc4r-mediated generation of cAMP, leading to stimulate growth during larval development. Acts by stabilizing an inactive conformation of mc4r during embryonic development, when all the energy consumed is obtained from the yolk sac, possibly to speed the rapid maturation to the mobile free-feeding juvenile stage reached at 5 dpf. The sequence is that of Melanocortin-2 receptor accessory protein 2A (mrap2a) from Danio rerio (Zebrafish).